A 391-amino-acid chain; its full sequence is Probable sugar efflux transporter (391 aa).

The next 12 membrane-spanning stretches (helical) occupy residues 16-36, 51-71, 82-102, 103-123, 138-158, 170-190, 210-230, 247-267, 277-297, 300-320, 338-358, and 361-381; these read VFVFSLSAFIFNTTEFVPIAL, VGLMITLYAWIVSLGSLPLML, LLFLFGLFIVSHILSVVAWDF, WVLLISRMGIALAHSVFWSIT, QALGLLALGSSLAMILGLPLG, TFGMIGGVALLVALLMYRLLP, PLLVGIYLLVILAISGHFTTY, VATLMLFVFGLAGVMGSFLFG, FIACAIILVLCPQLLLFSFKH, WVIFLQIFLWGIGITSLGISL, IFSGSYNVGIGSGALFGSIVI, and LGLGYIGFVGGALGLLALFWF.

It belongs to the major facilitator superfamily. SotB (TC 2.A.1.2) family.

It localises to the cell inner membrane. Involved in the efflux of sugars. The physiological role may be the reduction of the intracellular concentration of toxic sugars or sugar metabolites. The sequence is that of Probable sugar efflux transporter from Helicobacter acinonychis (strain Sheeba).